The primary structure comprises 473 residues: Glutamate--tRNA ligase 1 (473 aa).

The 'HIGH' region motif lies at 11 to 21 (PSPTGFLHIGG). Residues 111 to 132 (REQARKEGRPPRYDGRWRDRAE) form a disordered region. Positions 240 to 244 (KLSKR) match the 'KMSKS' region motif. K243 lines the ATP pocket.

Belongs to the class-I aminoacyl-tRNA synthetase family. Glutamate--tRNA ligase type 1 subfamily. Monomer.

Its subcellular location is the cytoplasm. It carries out the reaction tRNA(Glu) + L-glutamate + ATP = L-glutamyl-tRNA(Glu) + AMP + diphosphate. Its function is as follows. Catalyzes the attachment of glutamate to tRNA(Glu) in a two-step reaction: glutamate is first activated by ATP to form Glu-AMP and then transferred to the acceptor end of tRNA(Glu). In Beijerinckia indica subsp. indica (strain ATCC 9039 / DSM 1715 / NCIMB 8712), this protein is Glutamate--tRNA ligase 1.